The primary structure comprises 86 residues: RNA-binding protein Hfq (86 aa).

The Sm domain occupies 9-69 (DRFLNILRTS…VSTIMPESFV (61 aa)).

It belongs to the Hfq family. As to quaternary structure, homohexamer.

Its function is as follows. RNA chaperone that binds small regulatory RNA (sRNAs) and mRNAs to facilitate mRNA translational regulation in response to envelope stress, environmental stress and changes in metabolite concentrations. Also binds with high specificity to tRNAs. This is RNA-binding protein Hfq from Thermosipho melanesiensis (strain DSM 12029 / CIP 104789 / BI429).